The following is a 486-amino-acid chain: ATP synthase subunit beta (486 aa).

Residue 170–177 (GGAGVGKT) participates in ATP binding.

It belongs to the ATPase alpha/beta chains family. F-type ATPases have 2 components, CF(1) - the catalytic core - and CF(0) - the membrane proton channel. CF(1) has five subunits: alpha(3), beta(3), gamma(1), delta(1), epsilon(1). CF(0) has three main subunits: a(1), b(2) and c(9-12). The alpha and beta chains form an alternating ring which encloses part of the gamma chain. CF(1) is attached to CF(0) by a central stalk formed by the gamma and epsilon chains, while a peripheral stalk is formed by the delta and b chains.

The protein resides in the cell membrane. The enzyme catalyses ATP + H2O + 4 H(+)(in) = ADP + phosphate + 5 H(+)(out). In terms of biological role, produces ATP from ADP in the presence of a proton gradient across the membrane. The catalytic sites are hosted primarily by the beta subunits. This Clavibacter sepedonicus (Clavibacter michiganensis subsp. sepedonicus) protein is ATP synthase subunit beta.